The chain runs to 101 residues: CRISPR-associated endoribonuclease Cas2 (101 aa).

Asp-8 lines the Mg(2+) pocket.

It belongs to the CRISPR-associated endoribonuclease Cas2 protein family. Homodimer, forms a heterotetramer with a Cas1 homodimer. The cofactor is Mg(2+).

Functionally, CRISPR (clustered regularly interspaced short palindromic repeat), is an adaptive immune system that provides protection against mobile genetic elements (viruses, transposable elements and conjugative plasmids). CRISPR clusters contain sequences complementary to antecedent mobile elements and target invading nucleic acids. CRISPR clusters are transcribed and processed into CRISPR RNA (crRNA). Functions as a ssRNA-specific endoribonuclease. Involved in the integration of spacer DNA into the CRISPR cassette. This Parvibaculum lavamentivorans (strain DS-1 / DSM 13023 / NCIMB 13966) protein is CRISPR-associated endoribonuclease Cas2.